The primary structure comprises 1218 residues: Protein STICHEL (1218 aa).

Positions alanine 24–tyrosine 136 are disordered. Polar residues-rich tracts occupy residues glycine 32–serine 46, alanine 54–asparagine 73, and tryptophan 86–lysine 95. Positions arginine 163–serine 180 match the Bipartite nuclear localization signal motif. Short sequence motifs (PEST) lie at residues arginine 273 to arginine 304 and arginine 425 to arginine 449. Glycine 490–threonine 497 lines the ATP pocket. Cysteine 509, cysteine 518, cysteine 521, and cysteine 524 together coordinate Zn(2+). Residues glutamate 762–arginine 788 adopt a coiled-coil conformation. The tract at residues methionine 802 to valine 828 is disordered. A compositionally biased stretch (polar residues) spans serine 804–arginine 819. 2 short sequence motifs (bipartite nuclear localization signal) span residues arginine 1178 to asparagine 1195 and arginine 1196 to glutamate 1213.

This sequence belongs to the DnaX/STICHEL family. As to quaternary structure, interacts with BLT. As to expression, ubiquitous.

The protein localises to the nucleus. Acts as a key regulator of trichome branching through an endoreduplication-independent pathway. This is Protein STICHEL (STI) from Arabidopsis thaliana (Mouse-ear cress).